The chain runs to 267 residues: Dihydropteroate synthase (267 aa).

Residues 1 to 251 enclose the Pterin-binding domain; that stretch reads MTKTKIMGIL…NVELNAKLAK (251 aa). Residue asparagine 11 participates in Mg(2+) binding. (7,8-dihydropterin-6-yl)methyl diphosphate-binding positions include threonine 51, aspartate 84, asparagine 103, aspartate 167, lysine 203, and 239 to 241; that span reads RVH.

It belongs to the DHPS family. As to quaternary structure, homodimer. It depends on Mg(2+) as a cofactor.

It catalyses the reaction (7,8-dihydropterin-6-yl)methyl diphosphate + 4-aminobenzoate = 7,8-dihydropteroate + diphosphate. It participates in cofactor biosynthesis; tetrahydrofolate biosynthesis; 7,8-dihydrofolate from 2-amino-4-hydroxy-6-hydroxymethyl-7,8-dihydropteridine diphosphate and 4-aminobenzoate: step 1/2. Functionally, catalyzes the condensation of para-aminobenzoate (pABA) with 6-hydroxymethyl-7,8-dihydropterin diphosphate (DHPt-PP) to form 7,8-dihydropteroate (H2Pte), the immediate precursor of folate derivatives. This Staphylococcus aureus (strain MW2) protein is Dihydropteroate synthase (folP).